The primary structure comprises 328 residues: Dihydroorotate dehydrogenase (quinone), mitochondrial (328 aa).

The chain crosses the membrane as a helical span at residues 21–38 (AHGLSIAGLKTGLVTGSA). FMN contacts are provided by residues 61–65 (AGYDK) and Thr85. Lys65 is a binding site for substrate. Position 110 to 114 (110 to 114 (NRLGF)) interacts with substrate. Positions 139 and 170 each coordinate FMN. 170–175 (NISSPN) contacts substrate. Ser173 functions as the Nucleophile in the catalytic mechanism. Lys215 and Ser243 together coordinate FMN. 244–245 (NT) lines the substrate pocket. Residues Gly266 and Gly295 each contribute to the FMN site.

This sequence belongs to the dihydroorotate dehydrogenase family. Type 2 subfamily. It depends on FMN as a cofactor.

It is found in the mitochondrion inner membrane. It catalyses the reaction (S)-dihydroorotate + a quinone = orotate + a quinol. It participates in pyrimidine metabolism; UMP biosynthesis via de novo pathway; orotate from (S)-dihydroorotate (quinone route): step 1/1. In terms of biological role, catalyzes the conversion of dihydroorotate to orotate with quinone as electron acceptor. This Cyclocybe aegerita (Black poplar mushroom) protein is Dihydroorotate dehydrogenase (quinone), mitochondrial (URA1).